A 352-amino-acid chain; its full sequence is Molybdenum import ATP-binding protein ModC (352 aa).

The region spanning 2 to 230 (MLEINVKKRL…PLFEPWQEQG (229 aa)) is the ABC transporter domain. 32–39 (GISGSGKS) contacts ATP. The region spanning 290–352 (KTSIRNILSG…YAQIKAVSVM (63 aa)) is the Mop domain.

This sequence belongs to the ABC transporter superfamily. Molybdate importer (TC 3.A.1.8) family. In terms of assembly, the complex is composed of two ATP-binding proteins (ModC), two transmembrane proteins (ModB) and a solute-binding protein (ModA).

Its subcellular location is the cell inner membrane. The enzyme catalyses molybdate(out) + ATP + H2O = molybdate(in) + ADP + phosphate + H(+). Its function is as follows. Part of the ABC transporter complex ModABC involved in molybdenum import. Responsible for energy coupling to the transport system. This Mannheimia succiniciproducens (strain KCTC 0769BP / MBEL55E) protein is Molybdenum import ATP-binding protein ModC.